Consider the following 154-residue polypeptide: Sperm microtubule associated protein 1 (154 aa).

The protein is Sperm microtubule associated protein 1 of Homo sapiens (Human).